The chain runs to 356 residues: UDP-3-O-acylglucosamine N-acyltransferase (356 aa).

Residue His242 is the Proton acceptor of the active site.

It belongs to the transferase hexapeptide repeat family. LpxD subfamily. As to quaternary structure, homotrimer.

It catalyses the reaction a UDP-3-O-[(3R)-3-hydroxyacyl]-alpha-D-glucosamine + a (3R)-hydroxyacyl-[ACP] = a UDP-2-N,3-O-bis[(3R)-3-hydroxyacyl]-alpha-D-glucosamine + holo-[ACP] + H(+). Its pathway is bacterial outer membrane biogenesis; LPS lipid A biosynthesis. Its function is as follows. Catalyzes the N-acylation of UDP-3-O-acylglucosamine using 3-hydroxyacyl-ACP as the acyl donor. Is involved in the biosynthesis of lipid A, a phosphorylated glycolipid that anchors the lipopolysaccharide to the outer membrane of the cell. The chain is UDP-3-O-acylglucosamine N-acyltransferase from Acinetobacter baumannii (strain ACICU).